A 259-amino-acid polypeptide reads, in one-letter code: Large ribosomal subunit protein uL3c (259 aa).

The transit peptide at 1 to 37 (LKTTPLTLRSPFLHRLPLRALKTHKPTSLHISKSSIS) directs the protein to the chloroplast. The interval 176–211 (MTHGSKSHRQLGSIGAGTTPGRVYKGKKMPGRMGGT) is disordered. Positions 199-211 (YKGKKMPGRMGGT) are enriched in basic residues.

The protein belongs to the universal ribosomal protein uL3 family. Part of the 50S ribosomal subunit.

It localises to the plastid. Its subcellular location is the chloroplast. Functionally, one of the primary rRNA binding proteins, it binds directly near the 3'-end of the 23S rRNA, where it nucleates assembly of the 50S subunit. The chain is Large ribosomal subunit protein uL3c (RPL3) from Nicotiana tabacum (Common tobacco).